We begin with the raw amino-acid sequence, 95 residues long: MSFKPLHDRIAIKPIENEEKTKGGIIIPDTAKEKPMQGEIVAVGNGVLNKNGEIYPLELKVGDKVLYGKWAGTEIEIKGEKLIVMKESDVFGIIN.

Belongs to the GroES chaperonin family. As to quaternary structure, heptamer of 7 subunits arranged in a ring. Interacts with the chaperonin GroEL.

It localises to the cytoplasm. Its function is as follows. Together with the chaperonin GroEL, plays an essential role in assisting protein folding. The GroEL-GroES system forms a nano-cage that allows encapsulation of the non-native substrate proteins and provides a physical environment optimized to promote and accelerate protein folding. GroES binds to the apical surface of the GroEL ring, thereby capping the opening of the GroEL channel. This chain is Co-chaperonin GroES, found in Rickettsia typhi (strain ATCC VR-144 / Wilmington).